The following is a 542-amino-acid chain: CTP synthase (542 aa).

Residues 1 to 265 (MARYVFITGG…DSEVLAAFGI (265 aa)) form an amidoligase domain region. Ser13 serves as a coordination point for CTP. Residue Ser13 coordinates UTP. ATP is bound by residues 14–19 (SLGKGI) and Asp71. Residues Asp71 and Glu139 each contribute to the Mg(2+) site. CTP-binding positions include 146–148 (DIE), 186–191 (KTKPTQ), and Lys222. UTP is bound by residues 186-191 (KTKPTQ) and Lys222. Residues 291-541 (TIAIVGKYTG…VEAAVEQSRL (251 aa)) form the Glutamine amidotransferase type-1 domain. Gly353 lines the L-glutamine pocket. The Nucleophile; for glutamine hydrolysis role is filled by Cys380. L-glutamine contacts are provided by residues 381-384 (FGMQ), Glu404, and Arg469. Active-site residues include His514 and Glu516.

Belongs to the CTP synthase family. In terms of assembly, homotetramer.

It carries out the reaction UTP + L-glutamine + ATP + H2O = CTP + L-glutamate + ADP + phosphate + 2 H(+). The enzyme catalyses L-glutamine + H2O = L-glutamate + NH4(+). The catalysed reaction is UTP + NH4(+) + ATP = CTP + ADP + phosphate + 2 H(+). Its pathway is pyrimidine metabolism; CTP biosynthesis via de novo pathway; CTP from UDP: step 2/2. Its activity is regulated as follows. Allosterically activated by GTP, when glutamine is the substrate; GTP has no effect on the reaction when ammonia is the substrate. The allosteric effector GTP functions by stabilizing the protein conformation that binds the tetrahedral intermediate(s) formed during glutamine hydrolysis. Inhibited by the product CTP, via allosteric rather than competitive inhibition. Catalyzes the ATP-dependent amination of UTP to CTP with either L-glutamine or ammonia as the source of nitrogen. Regulates intracellular CTP levels through interactions with the four ribonucleotide triphosphates. This is CTP synthase from Agrobacterium fabrum (strain C58 / ATCC 33970) (Agrobacterium tumefaciens (strain C58)).